The chain runs to 412 residues: Phytoene synthase, chloroplastic (412 aa).

The protein belongs to the phytoene/squalene synthase family. Monomer. Expressed in roots, leaves, flower buds, sepals, petals, lips and lip crests.

The protein localises to the plastid. Its subcellular location is the chloroplast. It catalyses the reaction 2 (2E,6E,10E)-geranylgeranyl diphosphate = 15-cis-phytoene + 2 diphosphate. Its pathway is carotenoid biosynthesis; phytoene biosynthesis; all-trans-phytoene from geranylgeranyl diphosphate: step 1/1. In terms of biological role, catalyzes the reaction from prephytoene diphosphate to phytoene. In Oncidium hybrid cultivar (Orchid), this protein is Phytoene synthase, chloroplastic (PSY).